A 700-amino-acid chain; its full sequence is Protein UL29/28 (700 aa).

The tract at residues 1 to 30 (MSGRRKGCSAATASSSSSSPPSRLPLPGHA) is disordered. The span at 9 to 21 (SAATASSSSSSPP) shows a compositional bias: low complexity.

Belongs to the herpesviridae US22 family. In terms of assembly, interacts with UL38 and host HDAC1; these interactions are necessary for the HDAC1 interaction with UL38. Interacts with host MTA2.

It localises to the virion. The protein resides in the host nucleus. It is found in the host cytoplasm. Its function is as follows. Contributes to activation of immediate-early gene expression. The protein is Protein UL29/28 (UL29) of Human cytomegalovirus (strain Merlin) (HHV-5).